Here is a 476-residue protein sequence, read N- to C-terminus: Growth arrest-specific protein 7 (476 aa).

The SH3 domain occupies methionine 1–lysine 62. The WW domain maps to valine 77–serine 110. The disordered stretch occupies residues threonine 100–glutamate 171. Residues proline 108 to serine 120 show a composition bias toward low complexity. Phosphoserine occurs at positions 117 and 163. Positions arginine 150 to glutamate 171 are enriched in polar residues. The region spanning threonine 196–aspartate 456 is the F-BAR domain. A coiled-coil region spans residues glutamate 309–isoleucine 419.

The protein localises to the cytoplasm. Its function is as follows. May play a role in promoting maturation and morphological differentiation of cerebellar neurons. This is Growth arrest-specific protein 7 (GAS7) from Homo sapiens (Human).